The sequence spans 152 residues: Regulatory protein RecX (152 aa).

Belongs to the RecX family.

The protein localises to the cytoplasm. Modulates RecA activity. In Haemophilus influenzae (strain PittEE), this protein is Regulatory protein RecX.